A 237-amino-acid chain; its full sequence is Type III pantothenate kinase (237 aa).

Residue 6–13 (DAGNSRVK) participates in ATP binding. Residues tyrosine 86 and 93–96 (GADR) each bind substrate. Aspartate 95 functions as the Proton acceptor in the catalytic mechanism. Threonine 118 is a binding site for ATP. Threonine 168 lines the substrate pocket.

This sequence belongs to the type III pantothenate kinase family. As to quaternary structure, homodimer. It depends on NH4(+) as a cofactor. Requires K(+) as cofactor.

It localises to the cytoplasm. It carries out the reaction (R)-pantothenate + ATP = (R)-4'-phosphopantothenate + ADP + H(+). It participates in cofactor biosynthesis; coenzyme A biosynthesis; CoA from (R)-pantothenate: step 1/5. In terms of biological role, catalyzes the phosphorylation of pantothenate (Pan), the first step in CoA biosynthesis. This chain is Type III pantothenate kinase, found in Chromobacterium violaceum (strain ATCC 12472 / DSM 30191 / JCM 1249 / CCUG 213 / NBRC 12614 / NCIMB 9131 / NCTC 9757 / MK).